A 769-amino-acid chain; its full sequence is Disintegrin and metalloproteinase domain-containing protein 11 (769 aa).

The signal sequence occupies residues 1-23 (MRLLRRWAFAALLLSLLPTPGLG). A propeptide spanning residues 24 to 225 (TQGPAGALRW…PNRPRLRRKR (202 aa)) is cleaved from the precursor. Residues 40 to 78 (GGPGAPEVTEPSRLVRESSGGEVRKQQLDTRVRQEPPGG) form a disordered region. Residues 61 to 73 (EVRKQQLDTRVRQ) are compositionally biased toward basic and acidic residues. Asn-96 and Asn-163 each carry an N-linked (GlcNAc...) asparagine glycan. The Extracellular portion of the chain corresponds to 226-734 (QVRRGHPTVH…ERYKGPSGTN (509 aa)). The Peptidase M12B domain maps to 239–438 (KYVELIVIND…GGGSCLFNKP (200 aa)). A required for localization to cerebellar cortex basket cell terminals. Also required for localization of KCNA1, KCNA2, DLG4 and ADAM22 to cerebellar cortex basket cell terminal perisomatic axons and pinceaux region spans residues 332 to 769 (GRTFQSTSSG…NIRRGRSGGA (438 aa)). Disulfide bonds link Cys-349/Cys-433, Cys-392/Cys-417, Cys-394/Cys-401, and Cys-503/Cys-523. The Disintegrin domain occupies 444-531 (PPECGNGFVE…QCPPNLHKLD (88 aa)). Asn-605 and Asn-673 each carry an N-linked (GlcNAc...) asparagine glycan. 3 disulfide bridges follow: Cys-677/Cys-692, Cys-686/Cys-698, and Cys-700/Cys-709. Residues 677–709 (CPGSGERRICSHHGVCSNEGKCICQPDWTGKDC) enclose the EGF-like domain. Residues 735-755 (IIIGSIAGAVLVAAIVLGGTG) traverse the membrane as a helical segment. Topologically, residues 756–769 (WGFKNIRRGRSGGA) are cytoplasmic.

As to quaternary structure, interacts with LGI1 and LGI4. Interacts with KCNA1/KV1.1, KCNA2/KV1.2, DLG4/PSD-95 and ADAM22. Post-translationally, the precursor is cleaved by a furin endopeptidase. As to expression, expressed predominantly in brain. Slightly detected or not at all in other tissues.

The protein localises to the presynaptic cell membrane. It is found in the perikaryon. It localises to the cell projection. The protein resides in the axon. In terms of biological role, probable ligand for integrin in the brain. This is a non catalytic metalloprotease-like protein. Required for localization of the potassium channel subunit proteins KCNA1/KV1.1 and KCNA2/KV1.2 at cerebellar cortex basket cell distal terminals, is thereby involved in ephaptic inhibitory synchronization of Purkinje cell firing and response to stress. Plays a role in spatial learning and motor coordination. Involved in the nociceptive pain response to chemical-derived stimulation. This chain is Disintegrin and metalloproteinase domain-containing protein 11 (ADAM11), found in Homo sapiens (Human).